The sequence spans 771 residues: Solute carrier family 7 member 14 (771 aa).

The next 6 helical transmembrane spans lie at 58–78 (LISLGVGSCVGTGMYVVSGLV), 83–103 (AGPGVIVSFIIAAVASILSGV), 119–141 (AYTYSYVTVGEFVAFFIGWNLIL), 187–207 (YPDLLALLIAVIVTIIVALGV), 216–236 (VLNVLNLAVWVFIMIAGLFFI), and 251–271 (WSGVLQGAATCFYAFIGFDII). Asn282 is a glycosylation site (N-linked (GlcNAc...) asparagine). A run of 5 helical transmembrane segments spans residues 291 to 311 (ASLVICLTAYVSVSVILTLMV), 336 to 356 (FVVAIGSVAGLTVSLLGSLFP), 360 to 380 (VIYAMAGDGLLFRFLAHVSSY), 384 to 404 (PVVACIVSGFLAALLALLVSL), and 407 to 427 (LIEMMSIGTLLAYTLVSVCVL). Phosphoserine occurs at positions 465, 468, and 488. 4 helical membrane-spanning segments follow: residues 565 to 585 (VTICVLLLFILMFIFCSFIIF), 596 to 616 (WAILLVVLMVLLISTLVFVIL), 628 to 648 (MAPCLPFVPAFAMLVNIYLML), and 655 to 675 (WIRFAVWCFVGLLIYFGYGIW). N-linked (GlcNAc...) asparagine glycosylation is present at Asn676. The tract at residues 736-771 (DAKANGRTSSKAKSKSKHKQNSEALIANDELDYSPE) is disordered. Basic residues predominate over residues 745–754 (SKAKSKSKHK). Ser757 and Ser769 each carry phosphoserine.

It belongs to the amino acid-polyamine-organocation (APC) superfamily. Cationic amino acid transporter (CAT) (TC 2.A.3.3) family. In terms of tissue distribution, expressed in skin fibroblasts.

It localises to the lysosome membrane. It carries out the reaction 4-aminobutanoate(in) = 4-aminobutanoate(out). Its function is as follows. Imports 4-aminobutanoate (GABA) into lysosomes. May act as a GABA sensor that regulates mTORC2-dependent INS signaling and gluconeogenesis. The transport mechanism and substrate selectivity remain to be elucidated. In Homo sapiens (Human), this protein is Solute carrier family 7 member 14.